The sequence spans 251 residues: Triosephosphate isomerase (251 aa).

N9 to K11 lines the substrate pocket. H95 (electrophile) is an active-site residue. E167 functions as the Proton acceptor in the catalytic mechanism. Substrate-binding positions include G173, S213, and G234–G235.

Belongs to the triosephosphate isomerase family. As to quaternary structure, homodimer.

Its subcellular location is the cytoplasm. The catalysed reaction is D-glyceraldehyde 3-phosphate = dihydroxyacetone phosphate. It participates in carbohydrate biosynthesis; gluconeogenesis. Its pathway is carbohydrate degradation; glycolysis; D-glyceraldehyde 3-phosphate from glycerone phosphate: step 1/1. In terms of biological role, involved in the gluconeogenesis. Catalyzes stereospecifically the conversion of dihydroxyacetone phosphate (DHAP) to D-glyceraldehyde-3-phosphate (G3P). This chain is Triosephosphate isomerase, found in Trichlorobacter lovleyi (strain ATCC BAA-1151 / DSM 17278 / SZ) (Geobacter lovleyi).